Reading from the N-terminus, the 380-residue chain is Cytochrome b (380 aa).

The next 4 helical transmembrane spans lie at 34-54 (FGSL…LLAM), 78-99 (WLIR…YLHI), 114-134 (WNTG…GYVL), and 179-199 (FFAL…IHLT). 2 residues coordinate heme b: His-84 and His-98. Heme b is bound by residues His-183 and His-197. A ubiquinone is bound at residue His-202. 4 consecutive transmembrane segments (helical) span residues 227–247 (LKDI…ALFS), 289–309 (LGGV…PFLH), 321–341 (ISQL…WVGS), and 348–368 (FIII…ILFP).

It belongs to the cytochrome b family. As to quaternary structure, the cytochrome bc1 complex contains 11 subunits: 3 respiratory subunits (MT-CYB, CYC1 and UQCRFS1), 2 core proteins (UQCRC1 and UQCRC2) and 6 low-molecular weight proteins (UQCRH/QCR6, UQCRB/QCR7, UQCRQ/QCR8, UQCR10/QCR9, UQCR11/QCR10 and a cleavage product of UQCRFS1). This cytochrome bc1 complex then forms a dimer. Heme b is required as a cofactor.

Its subcellular location is the mitochondrion inner membrane. In terms of biological role, component of the ubiquinol-cytochrome c reductase complex (complex III or cytochrome b-c1 complex) that is part of the mitochondrial respiratory chain. The b-c1 complex mediates electron transfer from ubiquinol to cytochrome c. Contributes to the generation of a proton gradient across the mitochondrial membrane that is then used for ATP synthesis. This chain is Cytochrome b (MT-CYB), found in Pelecanoides garnotii (Peruvian diving petrel).